A 195-amino-acid polypeptide reads, in one-letter code: ADP-ribosylation factor L (195 aa).

G2 carries the N-myristoyl glycine lipid modification. GTP is bound by residues G25–T32, D72–P76, and N131–D134.

This sequence belongs to the small GTPase superfamily. Arf family.

Functionally, may be involved in trafficking events within the endosomal system. The polypeptide is ADP-ribosylation factor L (arrL) (Dictyostelium discoideum (Social amoeba)).